A 247-amino-acid chain; its full sequence is Small ribosomal subunit protein uS3 (247 aa).

Positions 39–107 constitute a KH type-2 domain; the sequence is VRDYLRKKLD…PAQVNIEEIT (69 aa). Positions 213–247 are disordered; that stretch reads SVYNPPKEDKTRAPKRRGRSNSNRRNSDRANTDRG. The span at 237-247 shows a compositional bias: basic and acidic residues; the sequence is RNSDRANTDRG.

Belongs to the universal ribosomal protein uS3 family. In terms of assembly, part of the 30S ribosomal subunit. Forms a tight complex with proteins S10 and S14.

Its function is as follows. Binds the lower part of the 30S subunit head. Binds mRNA in the 70S ribosome, positioning it for translation. This chain is Small ribosomal subunit protein uS3, found in Psychrobacter sp. (strain PRwf-1).